Here is a 278-residue protein sequence, read N- to C-terminus: MTFEPTETLRDPFVLYGESFDSRLLLGTARYPSPATLQAAVEISRPAMVTVALRRQGAVGEGEGGQAFWQMLKALGVPVLPNTAGCFTPQEVVNTAMMAREVFETDWIKLELIGDDYTLQPDTLNLPDVAETLIKEGFKVLPYCTEDLVLCRRLLDVGCQALMPWAAPIGTGRGAINPHAMRVLRERLPDTPLIVDAGLGLPSHAAQVLEWGYDGVLLNTAVAQAAYPVNMARAFAQAVEAGRTAYLAGPMPEREVAQASTPVVGMPFWHAENTEHRA.

Lysine 109 acts as the Schiff-base intermediate with DXP in catalysis. Residues glycine 170, 197-198 (AG), and 219-220 (NT) contribute to the 1-deoxy-D-xylulose 5-phosphate site.

Belongs to the ThiG family. In terms of assembly, homotetramer. Forms heterodimers with either ThiH or ThiS.

The protein resides in the cytoplasm. It catalyses the reaction [ThiS sulfur-carrier protein]-C-terminal-Gly-aminoethanethioate + 2-iminoacetate + 1-deoxy-D-xylulose 5-phosphate = [ThiS sulfur-carrier protein]-C-terminal Gly-Gly + 2-[(2R,5Z)-2-carboxy-4-methylthiazol-5(2H)-ylidene]ethyl phosphate + 2 H2O + H(+). Its pathway is cofactor biosynthesis; thiamine diphosphate biosynthesis. Its function is as follows. Catalyzes the rearrangement of 1-deoxy-D-xylulose 5-phosphate (DXP) to produce the thiazole phosphate moiety of thiamine. Sulfur is provided by the thiocarboxylate moiety of the carrier protein ThiS. In vitro, sulfur can be provided by H(2)S. This is Thiazole synthase from Cupriavidus pinatubonensis (strain JMP 134 / LMG 1197) (Cupriavidus necator (strain JMP 134)).